Here is a 70-residue protein sequence, read N- to C-terminus: Cold shock-like protein CspF (70 aa).

The region spanning 7-67 is the CSD domain; that stretch reads GIVKTFDGKS…GLRGPSAANV (61 aa).

It is found in the cytoplasm. The sequence is that of Cold shock-like protein CspF (cspF) from Escherichia coli (strain K12).